We begin with the raw amino-acid sequence, 398 residues long: Lysophospholipid transporter LplT (398 aa).

Transmembrane regions (helical) follow at residues 19-39, 53-73, 91-111, 139-159, 164-184, 227-247, 257-277, 281-301, 304-324, 350-370, and 372-392; these read VIAA…ATLA, ILQM…GQVA, LGAA…LVGI, LMEA…GVLA, IAAL…NLFI, LFWG…PVAL, YLNA…AKLV, TVAR…IFSL, ALLP…FFVV, GENS…LVGI, and VVAI…ALWI.

Belongs to the major facilitator superfamily. LplT (TC 2.A.1.42) family.

The protein resides in the cell inner membrane. Functionally, catalyzes the facilitated diffusion of 2-acyl-glycero-3-phosphoethanolamine (2-acyl-GPE) into the cell. The sequence is that of Lysophospholipid transporter LplT from Citrobacter koseri (strain ATCC BAA-895 / CDC 4225-83 / SGSC4696).